The primary structure comprises 226 residues: 7-cyano-7-deazaguanine synthase (226 aa).

10–20 provides a ligand contact to ATP; that stretch reads LSGGLDSATAA. 4 residues coordinate Zn(2+): C191, C199, C202, and C205.

It belongs to the QueC family. Zn(2+) serves as cofactor.

The enzyme catalyses 7-carboxy-7-deazaguanine + NH4(+) + ATP = 7-cyano-7-deazaguanine + ADP + phosphate + H2O + H(+). It participates in purine metabolism; 7-cyano-7-deazaguanine biosynthesis. Functionally, catalyzes the ATP-dependent conversion of 7-carboxy-7-deazaguanine (CDG) to 7-cyano-7-deazaguanine (preQ(0)). In Synechococcus sp. (strain CC9902), this protein is 7-cyano-7-deazaguanine synthase.